Consider the following 169-residue polypeptide: MADLSVRRGTGSTPQRTREWDPFQQMQELMNWDPFELANHPWFANRQGPPAFVPAFEVRETKEAYIFKADLPGVDEKDIEVTLTGDRVSVSGKREREKREESERFYAYERSFGSFSRAFTLPEGVDGDNVRADLKNGVLTLTLPKRPEVQPKRIQVASSGTEQKEHIKA.

Disordered stretches follow at residues 1 to 21 (MADL…REWD) and 150 to 169 (QPKR…HIKA). The region spanning 47-159 (QGPPAFVPAF…QPKRIQVASS (113 aa)) is the sHSP domain.

Belongs to the small heat shock protein (HSP20) family.

In terms of biological role, may stabilize cellular components during stress and spore formation. This is Spore protein SP21 (hspA) from Stigmatella aurantiaca (strain DW4/3-1).